The primary structure comprises 185 residues: Ribosome-recycling factor (185 aa).

It belongs to the RRF family.

The protein resides in the cytoplasm. Functionally, responsible for the release of ribosomes from messenger RNA at the termination of protein biosynthesis. May increase the efficiency of translation by recycling ribosomes from one round of translation to another. The protein is Ribosome-recycling factor of Chromohalobacter salexigens (strain ATCC BAA-138 / DSM 3043 / CIP 106854 / NCIMB 13768 / 1H11).